The chain runs to 236 residues: MSLRQHQHPLIQRLADRIEAIWQAFFPLAPYALPEDLGYVEGKLEGERLTIENHCYQAPPFRKLHLELARVGESLDILHCVMFPEPRYDLPMFGCDLVGGRGQISAAIVDLSPVTGQLPAAYTCALNALPKLTFRQPRELPPWGHIFSPFCIFIRPQGEAEEQQFLDRIGEYLTLHCQLSQQAVPTDHPQAVIAGQRQYCQQQQQNDKTRRVLEKAFGVPWAERYMTTVLFDVPPV.

The protein belongs to the HY2 family.

The catalysed reaction is (2R,3Z)-phycocyanobilin + 4 oxidized [2Fe-2S]-[ferredoxin] = biliverdin IXalpha + 4 reduced [2Fe-2S]-[ferredoxin] + 4 H(+). Catalyzes the four-electron reduction of biliverdin IX-alpha (2-electron reduction at both the A and D rings); the reaction proceeds via an isolatable 2-electron intermediate, 181,182-dihydrobiliverdin. This is Phycocyanobilin:ferredoxin oxidoreductase (pcyA) from Thermosynechococcus vestitus (strain NIES-2133 / IAM M-273 / BP-1).